The primary structure comprises 265 residues: Dimethylsulfide dehydrogenase subunit gamma (265 aa).

Residues 1 to 25 (MPGFRFLLAATAAFLATSPALPLSA) form the signal peptide. Heme b is bound by residues His81 and Met147.

As to quaternary structure, heterotrimer of alpha, beta and gamma subunits. Requires heme b as cofactor.

It is found in the periplasm. May transfer electrons to the iron-sulfur centers of DdhB. The sequence is that of Dimethylsulfide dehydrogenase subunit gamma (ddhC) from Rhodovulum sulfidophilum (Rhodobacter sulfidophilus).